A 290-amino-acid chain; its full sequence is Transposon Ty3-G Gag polyprotein (290 aa).

At Ser-2 the chain carries N-acetylserine. Residues 265–282 form a CCHC-type zinc finger; it reads RLCFYCKKEGHRLNECRA.

It localises to the cytoplasm. Capsid protein (CA) is the structural component of the virus-like particle (VLP), forming the shell that encapsulates the retrotransposons dimeric RNA genome. In terms of biological role, nucleocapsid protein p9 (NC) forms the nucleocore that coats the retro-elements dimeric RNA. Binds these RNAs through its zinc fingers. Promotes primer tRNA(i)-Met annealing to the multipartite primer-binding site (PBS), dimerization of Ty3 RNA and initiation of reverse transcription. This Saccharomyces cerevisiae (strain ATCC 204508 / S288c) (Baker's yeast) protein is Transposon Ty3-G Gag polyprotein (TY3A-G).